The following is a 1103-amino-acid chain: MAAGCLLALTLTLFQSGLIGPSSEEPFPSPVTIKSWVDKMQEDLVTLAKTASGVTQLADIYEKYQDLYTVEPNNARQLVEIAARDIEKLLSNRSKALVRLAMEAEKVQAAHQWREDFASNEVVYYNAKDDLDPERNESEPGSQRIKPVFIEDANFGRQISYQHAAVHIPTDIYEGSTIVLNELNWTSALDEVFKRNRDEDPTLLWQVFGSATGLARYYPASPWVDNSRTPNKIDLYDVRRRPWYIQGAASPKDMLILVDVSGSVSGLTLKLIRTSVSEMLETLSDDDFVNVASFNSNAQDVSCFQHLVQANVRNKKVLKDAVNNITAKGITDYKKGFSFAFEQLLNYNVSRANCNKIIMLFTDGGEERAQEIFAKYNKDKKVRVFTFSVGQHNYDRGPIQWMACENKGYYYEIPSIGAIRINTQEYLDVLGRPMVLAGDKAKQVQWTNVYLDALELGLVITGTLPVFNVTGQSENKTNLKNQLILGVMGVDVSLEDIKRLTPRFTLCPNGYYFAIDPNGYVLLHPNLQPKPIGVGIPTINLRKRRPNVQNPKSQEPVTLDFLDAELENEIKVEIRNKMIDGESGEKTFRTLVKSQDERYIDKGNRTYTWTPVNGTDYSLALVLPTYSFYYIKAKLEETITQARYSETLKPDNFEESGYTFIAPREYCNDLKPSDNNTEFLLNFNEFIDRKTPNNPSCNTDLINRILLDAGFTNELVQNYWSKQKNIKGVKARFVVTDGGITRVYPKEAGENWQENPETYEDSFYKRSLDNDNYVFTAPYFNKSGPGAYESGIMVSKAVELYIQGKLLKPAVVGIKIDVNSWIENFTKTSIRDPCAGPVCDCKRNSDVMDCVILDDGGFLLMANHDDYTNQIGRFFGEIDPSMMRHLVNISLYAFNKSYDYQSVCDPGAAPKQGAGHRSAYVPSIADILQIGWWATAAAWSILQQLLLSLTFPRLLEAVEMEEDDFTASLSKQSCITEQTQYFFKNDTKSFSGLLDCGNCSRIFHVEKLMNTNLVFIMVESKGTCPCDTRLLMQAEQTSDGPDPCDMVKQPRYRKGPDVCFDNNVLEDYTDCGGVSGLNPSLWSIFGLQFILLWLVSGSRHYLL.

Residues 1 to 24 form the signal peptide; it reads MAAGCLLALTLTLFQSGLIGPSSE. At 25–1073 the chain is on the extracellular side; sequence EPFPSPVTIK…VLEDYTDCGG (1049 aa). Asn92 is a glycosylation site (N-linked (GlcNAc...) asparagine). Phosphoserine is present on Ser119. N-linked (GlcNAc...) asparagine glycans are attached at residues Asn136 and Asn184. A VWFA domain is found at 253–430; sequence DMLILVDVSG…INTQEYLDVL (178 aa). The a divalent metal cation site is built by Asp259, Ser261, and Ser263. The MIDAS-like motif motif lies at 259-263; that stretch reads DVSGS. N-linked (GlcNAc...) asparagine glycans are attached at residues Asn324 and Asn348. A disulfide bridge links Cys404 with Cys1059. Residues 446 to 537 form the Cache domain; that stretch reads WTNVYLDALE…QPKPIGVGIP (92 aa). N-linked (GlcNAc...) asparagine glycans are attached at residues Asn613, Asn781, and Asn888. A helical transmembrane segment spans residues 1074–1094; sequence VSGLNPSLWSIFGLQFILLWL. At 1095 to 1103 the chain is on the cytoplasmic side; sequence VSGSRHYLL.

Belongs to the calcium channel subunit alpha-2/delta family. In terms of assembly, dimer formed of alpha-2-1 and delta-1 chains; disulfide-linked. Voltage-dependent calcium channels are multisubunit complexes, consisting of alpha-1 (CACNA1), alpha-2 (CACNA2D), beta (CACNB) and delta (CACNA2D) subunits in a 1:1:1:1 ratio. Proteolytically processed into subunits alpha-2-1 and delta-1 that are disulfide-linked. As to expression, isoform 2A is expressed in skeletal muscle and aorta. Isoform 2B is expressed in brain. Isoform 2C is expressed in heart. Isoform 2D is expressed in heart and smooth muscle. Isoform 2E is expressed in smooth muscle. All five isoforms are expressed in the cardiovascular system.

The protein resides in the membrane. Its subcellular location is the cell membrane. Its function is as follows. The alpha-2/delta subunit of voltage-dependent calcium channels regulates calcium current density and activation/inactivation kinetics of the calcium channel. Plays an important role in excitation-contraction coupling. This is Voltage-dependent calcium channel subunit alpha-2/delta-1 (Cacna2d1) from Mus musculus (Mouse).